The chain runs to 395 residues: S-adenosylmethionine synthase (395 aa).

Residue His-16 coordinates ATP. Asp-18 lines the Mg(2+) pocket. Glu-44 contributes to the K(+) binding site. L-methionine is bound by residues Glu-57 and Gln-100. The tract at residues 100–110 (QSPDIAQGVDD) is flexible loop. Residues 174-176 (DAK), 241-242 (RF), Asp-250, 256-257 (RK), Ala-273, and Lys-277 contribute to the ATP site. Asp-250 lines the L-methionine pocket. Lys-281 lines the L-methionine pocket.

It belongs to the AdoMet synthase family. Homotetramer; dimer of dimers. Mg(2+) serves as cofactor. Requires K(+) as cofactor.

It is found in the cytoplasm. It carries out the reaction L-methionine + ATP + H2O = S-adenosyl-L-methionine + phosphate + diphosphate. It functions in the pathway amino-acid biosynthesis; S-adenosyl-L-methionine biosynthesis; S-adenosyl-L-methionine from L-methionine: step 1/1. In terms of biological role, catalyzes the formation of S-adenosylmethionine (AdoMet) from methionine and ATP. The overall synthetic reaction is composed of two sequential steps, AdoMet formation and the subsequent tripolyphosphate hydrolysis which occurs prior to release of AdoMet from the enzyme. The protein is S-adenosylmethionine synthase of Lactiplantibacillus plantarum (strain ATCC BAA-793 / NCIMB 8826 / WCFS1) (Lactobacillus plantarum).